We begin with the raw amino-acid sequence, 291 residues long: Hydroxysteroid 11-beta-dehydrogenase 1-like protein A (291 aa).

The first 18 residues, 1 to 18, serve as a signal peptide directing secretion; that stretch reads MAGVKLLLLSLCVGYTAY. Residues 40 to 66, 91 to 92, and 118 to 120 contribute to the NADP(+) site; these read GSST…TARR, DM, and NHI. Ser-170 serves as a coordination point for substrate. Tyr-183 (proton acceptor) is an active-site residue. NADP(+)-binding positions include 183–187 and 216–222; these read YCASK and GYIDTEN.

The protein belongs to the short-chain dehydrogenases/reductases (SDR) family.

The protein localises to the secreted. The catalysed reaction is cortisone + NADPH + H(+) = cortisol + NADP(+). Unidirectional NADP(+)-dependent cortisol dehydrogenase (in vitro). This Xenopus laevis (African clawed frog) protein is Hydroxysteroid 11-beta-dehydrogenase 1-like protein A (hsd11b1l-a).